The chain runs to 157 residues: Alanyl-tRNA editing protein AlaX-S (157 aa).

4 residues coordinate Zn(2+): histidine 9, histidine 13, cysteine 116, and histidine 120.

This sequence belongs to the class-II aminoacyl-tRNA synthetase family. Editing domain AlaX-S subfamily. Monomer and homodimer; the dimer is less active in tRNA editing and does not have a zinc ion associated with it. Another report shows only a monomeric form. Zn(2+) is required as a cofactor.

It localises to the cytoplasm. Functionally, functions in trans to edit the amino acid moiety from mischarged charged Ser-tRNA(Ala). Has little activity against Gly-tRNA(Ala). This chain is Alanyl-tRNA editing protein AlaX-S (alaXS), found in Pyrococcus horikoshii (strain ATCC 700860 / DSM 12428 / JCM 9974 / NBRC 100139 / OT-3).